The sequence spans 829 residues: Leucine--tRNA ligase (829 aa).

The short motif at 34–44 (PYPSGNIHMGH) is the 'HIGH' region element. The short motif at 591 to 595 (KMSKS) is the 'KMSKS' region element. Lys-594 serves as a coordination point for ATP.

This sequence belongs to the class-I aminoacyl-tRNA synthetase family.

Its subcellular location is the cytoplasm. The catalysed reaction is tRNA(Leu) + L-leucine + ATP = L-leucyl-tRNA(Leu) + AMP + diphosphate. This Ehrlichia chaffeensis (strain ATCC CRL-10679 / Arkansas) protein is Leucine--tRNA ligase.